The primary structure comprises 358 residues: MKKILALLVIAPLLISCSGKKNTEVNEALVKDTNGFEILMGQFAHNIENIWGLNEVLIAGPKDYVKYTDQYQTRSHINFDSGAITIETIATTDPAAHLRQAIISTLLMGDDPGSIDLYSDVNDIQISKEPFLYGQVLDNKGAPIRWEWRAAHFADYLVQTKLQKRTSGLHVIYSVTIQLVPNHLDKRAHKYLPMVRKASEKYGVEESLILAIMQTESSFNPYAVSGSDALGLMQVVQHTAGKDVFQMRGKWGKPSRSYLFDPENNIDTGTAYLAILQNNYLGGIQNPTSRRYAVITAYNGGAGSVLRVFSSDRTRAVGIINGMQPGDVYQTLTTKHPASESRHYLVKVNNAQKSYRRR.

An N-terminal signal peptide occupies residues 1–16 (MKKILALLVIAPLLIS). A lipid anchor (N-palmitoyl cysteine) is attached at C17. A lipid anchor (S-diacylglycerol cysteine) is attached at C17.

The protein belongs to the transglycosylase Slt family.

It localises to the cell outer membrane. The catalysed reaction is Exolytic cleavage of the (1-&gt;4)-beta-glycosidic linkage between N-acetylmuramic acid (MurNAc) and N-acetylglucosamine (GlcNAc) residues in peptidoglycan, from either the reducing or the non-reducing ends of the peptidoglycan chains, with concomitant formation of a 1,6-anhydrobond in the MurNAc residue.. In terms of biological role, murein-degrading enzyme. May play a role in recycling of muropeptides during cell elongation and/or cell division. This chain is Membrane-bound lytic murein transglycosylase C, found in Serratia proteamaculans (strain 568).